Here is a 150-residue protein sequence, read N- to C-terminus: Bcl-2-interacting killer (150 aa).

The BH3 signature appears at 51 to 65 (VALRLACIGDEMDLC). The chain crosses the membrane as a helical span at residues 127-147 (PGQLFPMVLLVFLLLGGAWYL). The interval 127–148 (PGQLFPMVLLVFLLLGGAWYLQ) is leucine-zipper.

In terms of assembly, interacts with RHBDL4/RHBDD1. Interacts with BCL2L10/BCL-B. In terms of processing, proteolytically cleaved by RHBDL4/RHBDD1. RHBDL4/RHBDD1-induced cleavage is a necessary step prior its degradation by the proteosome-dependent mechanism. Post-translationally, ubiquitinated by the ECS(ASB11) complex in response to endoplasmic reticulum stress, leading to substrate recognition by the segregase p97/VCP and degradation by the proteasome. As to expression, expressed in testis, kidney, liver, lung and heart.

It localises to the endomembrane system. It is found in the mitochondrion membrane. Functionally, accelerates programmed cell death. Binding to the apoptosis repressors Bcl-X(L), BHRF1 or Bcl-2 suppresses this death-promoting activity. This is Bcl-2-interacting killer (Bik) from Mus musculus (Mouse).